A 332-amino-acid polypeptide reads, in one-letter code: tRNA dimethylallyltransferase (332 aa).

30–37 provides a ligand contact to ATP; that stretch reads GPTAVGKT. 32-37 contacts substrate; sequence TAVGKT. The tract at residues 57–60 is interaction with substrate tRNA; it reads DSMQ.

Belongs to the IPP transferase family. As to quaternary structure, monomer. Requires Mg(2+) as cofactor.

The catalysed reaction is adenosine(37) in tRNA + dimethylallyl diphosphate = N(6)-dimethylallyladenosine(37) in tRNA + diphosphate. In terms of biological role, catalyzes the transfer of a dimethylallyl group onto the adenine at position 37 in tRNAs that read codons beginning with uridine, leading to the formation of N6-(dimethylallyl)adenosine (i(6)A). The protein is tRNA dimethylallyltransferase of Natranaerobius thermophilus (strain ATCC BAA-1301 / DSM 18059 / JW/NM-WN-LF).